The chain runs to 500 residues: Lysine--tRNA ligase (500 aa).

2 residues coordinate Mg(2+): glutamate 406 and glutamate 413.

The protein belongs to the class-II aminoacyl-tRNA synthetase family. Homodimer. The cofactor is Mg(2+).

It localises to the cytoplasm. The catalysed reaction is tRNA(Lys) + L-lysine + ATP = L-lysyl-tRNA(Lys) + AMP + diphosphate. This Sulfolobus acidocaldarius (strain ATCC 33909 / DSM 639 / JCM 8929 / NBRC 15157 / NCIMB 11770) protein is Lysine--tRNA ligase.